Consider the following 1294-residue polypeptide: uncharacterized protein (1294 aa).

Residues 1–375 (MSQQENGDVA…RNFKLNFSDY (375 aa)) are Extracellular-facing. Positions 28-287 (LHVRDLSIVA…FESIGYHVPQ (260 aa)) constitute an ABC transporter 1 domain. Residue asparagine 41 is glycosylated (N-linked (GlcNAc...) asparagine). 62-69 (GGSGSGKT) contacts ATP. Asparagine 86, asparagine 101, asparagine 151, asparagine 341, asparagine 349, and asparagine 371 each carry an N-linked (GlcNAc...) asparagine glycan. The chain crosses the membrane as a helical span at residues 376 to 396 (VTLISTFAEPLIIGTVCGWIY). The Cytoplasmic portion of the chain corresponds to 397–495 (YKPDKSSIGG…EADARKFFYQ (99 aa)). The helical transmembrane segment at 496–516 (FAVVFLCQLSCSGLSMLSVAV) threads the bilayer. Over 517–530 (SRDFSKASLVGNMT) the chain is Extracellular. A glycan (N-linked (GlcNAc...) asparagine) is linked at asparagine 528. Residues 531–551 (FTVLSMGCGFFVNAKVMPVYV) form a helical membrane-spanning segment. Over 552–604 (RWIKYIAFTWYSFGTLMSSTFTNSYCTTDNLDECLGNQILEVYGFPRNWITVP) the chain is Cytoplasmic. The chain crosses the membrane as a helical span at residues 605 to 625 (AVVLLCWSVGYFVVGAIILYL). At 626 to 1038 (HKIDITLQNE…TTTRRSFDSL (413 aa)) the chain is on the extracellular side. Residues 679–941 (IKLEDIDLRV…FTELGYNCPS (263 aa)) enclose the ABC transporter 2 domain. An ATP-binding site is contributed by 727–734 (GPSGSGKS). The N-linked (GlcNAc...) asparagine glycan is linked to asparagine 983. The chain crosses the membrane as a helical span at residues 1039–1059 (MARIAQIPGLGVIFALFFAPV). Over 1060–1120 (KHNYTSISNR…PFFLAYMTLE (61 aa)) the chain is Cytoplasmic. The chain crosses the membrane as a helical span at residues 1121-1141 (LPLSALASVLYAVFTVLACGL). Over 1142 to 1266 (PRTAGNFFAT…YGLVRNTQKY (125 aa)) the chain is Extracellular. Residues 1267 to 1287 (LGIIVCVAIIYRLIAFFILKA) form a helical membrane-spanning segment. Over 1288-1294 (KLEWIKW) the chain is Cytoplasmic.

Belongs to the ABC transporter superfamily. ABCG family. PDR (TC 3.A.1.205) subfamily.

The protein resides in the membrane. This is an uncharacterized protein from Saccharomyces cerevisiae (strain ATCC 204508 / S288c) (Baker's yeast).